We begin with the raw amino-acid sequence, 186 residues long: Low amplitude and bright protein LabA (186 aa).

Functionally, functions in an output pathway of the circadian clock. One of three clock output pathways. Involved in negative feedback regulation of KaiC; deletion leads to overexpression of KaiC protein and decreases the amplitude of the circadian response. Overexpression reduces the expression of circadian genes. This Synechococcus elongatus (strain ATCC 33912 / PCC 7942 / FACHB-805) (Anacystis nidulans R2) protein is Low amplitude and bright protein LabA.